The primary structure comprises 96 residues: Protein Vpr (96 aa).

The tract at residues 1–42 (MEQAPEDQGPQREPHNEWTLELLEELKNEAVRHFPRIWLHGL) is homooligomerization. A phosphoserine; by host mark is found at S79, S94, and S96.

Belongs to the HIV-1 VPR protein family. As to quaternary structure, homooligomer, may form homodimer. Interacts with p6-gag region of the Pr55 Gag precursor protein through a (Leu-X-X)4 motif near the C-terminus of the P6gag protein. Interacts with host UNG. May interact with host RAD23A/HHR23A. Interacts with host VPRBP/DCAF1, leading to hijack the CUL4A-RBX1-DDB1-DCAF1/VPRBP complex, mediating ubiquitination of host proteins such as TERT and ZGPAT and arrest of the cell cycle in G2 phase. Post-translationally, phosphorylated on several residues by host. These phosphorylations regulate VPR activity for the nuclear import of the HIV-1 pre-integration complex.

The protein resides in the virion. It localises to the host nucleus. Its subcellular location is the host extracellular space. In terms of biological role, during virus entry, plays a role in the transport of the viral pre-integration (PIC) complex to the host nucleus. This function is crucial for viral infection of non-dividing macrophages. May act directly at the nuclear pore complex, by binding nucleoporins phenylalanine-glycine (FG)-repeat regions. During virus replication, may deplete host UNG protein, and incude G2-M cell cycle arrest. Acts by targeting specific host proteins for degradation by the 26S proteasome, through association with the cellular CUL4A-DDB1 E3 ligase complex by direct interaction with host VPRPB/DCAF-1. Cell cycle arrest reportedly occurs within hours of infection and is not blocked by antiviral agents, suggesting that it is initiated by the VPR carried into the virion. Additionally, VPR induces apoptosis in a cell cycle dependent manner suggesting that these two effects are mechanistically linked. Detected in the serum and cerebrospinal fluid of AIDS patient, VPR may also induce cell death to bystander cells. The protein is Protein Vpr of Homo sapiens (Human).